The sequence spans 516 residues: Maturase K (516 aa).

It belongs to the intron maturase 2 family. MatK subfamily.

The protein resides in the plastid. Its subcellular location is the chloroplast. Its function is as follows. Usually encoded in the trnK tRNA gene intron. Probably assists in splicing its own and other chloroplast group II introns. The chain is Maturase K from Medeola virginiana (Indian cucumber root).